We begin with the raw amino-acid sequence, 1241 residues long: ATP-dependent helicase/nuclease subunit A (1241 aa).

Residues 12–485 (SQWTDDQWKA…IDLAKNFRSR (474 aa)) enclose the UvrD-like helicase ATP-binding domain. Position 33-40 (33-40 (AAAGSGKT)) interacts with ATP. In terms of domain architecture, UvrD-like helicase C-terminal spans 505 to 805 (GEIDYDADAE…RIMTIHKSKG (301 aa)).

This sequence belongs to the helicase family. AddA subfamily. As to quaternary structure, heterodimer of AddA and AddB/RexB. Mg(2+) is required as a cofactor.

It catalyses the reaction Couples ATP hydrolysis with the unwinding of duplex DNA by translocating in the 3'-5' direction.. It carries out the reaction ATP + H2O = ADP + phosphate + H(+). Its function is as follows. The heterodimer acts as both an ATP-dependent DNA helicase and an ATP-dependent, dual-direction single-stranded exonuclease. Recognizes the chi site generating a DNA molecule suitable for the initiation of homologous recombination. The AddA nuclease domain is required for chi fragment generation; this subunit has the helicase and 3' -&gt; 5' nuclease activities. The sequence is that of ATP-dependent helicase/nuclease subunit A from Bacillus cereus (strain B4264).